The following is a 611-amino-acid chain: Threonine--tRNA ligase (611 aa).

The interval 211–509 (DHRKLGTELE…LTEHYAGEFP (299 aa)) is catalytic. The Zn(2+) site is built by Cys310, His361, and His486.

This sequence belongs to the class-II aminoacyl-tRNA synthetase family. As to quaternary structure, homodimer. It depends on Zn(2+) as a cofactor.

The protein resides in the cytoplasm. It catalyses the reaction tRNA(Thr) + L-threonine + ATP = L-threonyl-tRNA(Thr) + AMP + diphosphate + H(+). In terms of biological role, catalyzes the attachment of threonine to tRNA(Thr) in a two-step reaction: L-threonine is first activated by ATP to form Thr-AMP and then transferred to the acceptor end of tRNA(Thr). Also edits incorrectly charged L-seryl-tRNA(Thr). The polypeptide is Threonine--tRNA ligase (Nautilia profundicola (strain ATCC BAA-1463 / DSM 18972 / AmH)).